The sequence spans 586 residues: Protein translocase subunit SecD (586 aa).

The next 6 membrane-spanning stretches (helical) occupy residues 7–27, 418–438, 439–459, 465–485, 521–541, and 546–566; these read LILILLVTFFACLLIFPTLKW, SALALCLVFLFICVYYGLSGV, VAGFSLVIYNVFLILAILSAF, LTSIAGLILTMGMAVDINIVI, TFIAVLFLTLLGTGVIQGFAW, and GIVASLFSSLIFSRFILEFII.

It belongs to the SecD/SecF family. SecD subfamily. In terms of assembly, forms a complex with SecF. Part of the essential Sec protein translocation apparatus which comprises SecA, SecYEG and auxiliary proteins SecDF. Other proteins may also be involved.

It localises to the cell inner membrane. Functionally, part of the Sec protein translocase complex. Interacts with the SecYEG preprotein conducting channel. SecDF uses the proton motive force (PMF) to complete protein translocation after the ATP-dependent function of SecA. The chain is Protein translocase subunit SecD from Borreliella burgdorferi (strain ATCC 35210 / DSM 4680 / CIP 102532 / B31) (Borrelia burgdorferi).